Reading from the N-terminus, the 153-residue chain is ORM1-like protein 3 (153 aa).

The Cytoplasmic segment spans residues 1 to 21 (MNVGTAHSEVNPNTRVMNSRG). The next 2 helical transmembrane spans lie at 22 to 42 (IWLS…SIPF) and 43 to 63 (VSVP…MYIF). The Cytoplasmic segment spans residues 64–94 (LHTVKGTPFETPDQGKARLLTHWEQMDYGVQ). The chain crosses the membrane as a helical span at residues 95-117 (FTASRKFLTITPIILYFLTSFYT). At 118 to 121 (KYDR) the chain is on the extracellular side. Residues 122-142 (VHFVINTISLLTVLIPKLPQF) traverse the membrane as a helical segment. Proline 137 bears the Hydroxyproline mark. At 143–153 (HGVRLFGINKY) the chain is on the cytoplasmic side.

Belongs to the ORM family. In terms of assembly, ceramide-sensitive subunit of the serine palmitoyltransferase (SPT) complex, which is also composed of SPTLC1, SPTLC2/3 and SPTSSA/B. In terms of processing, when hydroxylated at Pro-137, ubiquitinated via 'Lys-48'-linkage, leading to proteasomal degradation. In endothelial cells, ORMDL3 proteasomal degradation is controlled by the sphingosine 1-phosphate receptor signaling pathway.

It localises to the endoplasmic reticulum membrane. Its function is as follows. Plays an essential role in the homeostatic regulation of sphingolipid de novo biosynthesis by modulating the activity of the serine palmitoyltransferase (SPT) in response to ceramide levels. When complexed to SPT, the binding of ceramides to its N-terminus stabilizes a conformation that block SPT substrate entry, hence preventing SPT catalytic activity. Through this mechanism, maintains ceramide levels at sufficient concentrations for the production of complex sphingolipids, but which prevents the accumulation of ceramides to levels that trigger apoptosis. The protein is ORM1-like protein 3 (ormdl3) of Danio rerio (Zebrafish).